The following is a 692-amino-acid chain: E3 ubiquitin-protein ligase MARCHF7 (692 aa).

Methionine 1 is modified (N-acetylmethionine). Disordered stretches follow at residues methionine 1–serine 165, serine 201–threonine 280, phenylalanine 296–glutamate 343, leucine 360–arginine 425, serine 440–glycine 474, and serine 512–leucine 532. Basic and acidic residues predominate over residues tyrosine 37–serine 48. Composition is skewed to polar residues over residues proline 61–glutamine 83 and serine 95–valine 132. The span at leucine 140–serine 153 shows a compositional bias: basic and acidic residues. The span at serine 201–proline 214 shows a compositional bias: polar residues. A compositionally biased stretch (low complexity) spans serine 215–serine 233. Polar residues predominate over residues serine 235–serine 272. Residues phenylalanine 296–serine 305 show a composition bias toward low complexity. The segment covering leucine 306–valine 336 has biased composition (polar residues). Phosphoserine is present on residues serine 318 and serine 389. Low complexity predominate over residues alanine 450–serine 462. Over residues glycine 516–leucine 532 the composition is skewed to basic and acidic residues. Residues aspartate 545 to asparagine 615 form an RING-CH-type zinc finger. Zn(2+)-binding residues include cysteine 553, cysteine 556, cysteine 571, cysteine 573, histidine 581, cysteine 584, cysteine 605, and cysteine 608. Residue threonine 687 is modified to Phosphothreonine. Serine 688 is subject to Phosphoserine.

The protein resides in the cytoplasm. It carries out the reaction S-ubiquitinyl-[E2 ubiquitin-conjugating enzyme]-L-cysteine + [acceptor protein]-L-lysine = [E2 ubiquitin-conjugating enzyme]-L-cysteine + N(6)-ubiquitinyl-[acceptor protein]-L-lysine.. It participates in protein modification; protein ubiquitination. In terms of biological role, E3 ubiquitin-protein ligase which may specifically enhance the E2 activity of HIP2. E3 ubiquitin ligases accept ubiquitin from an E2 ubiquitin-conjugating enzyme in the form of a thioester and then directly transfer the ubiquitin to targeted substrates. May be involved in T-cell proliferation by regulating LIF secretion. May play a role in lysosome homeostasis. Promotes 'Lys-6', 'Lys-11' and 'Lys-63'-linked mixed polyubiquitination on ATG14 leading to the inhibition of autophagy by impairing the interaction between ATG14 and STX7. Participates in the dopamine-mediated negative regulation of the NLRP3 inflammasome by promoting its uibiquitination and subsequent degradation. In Rattus norvegicus (Rat), this protein is E3 ubiquitin-protein ligase MARCHF7 (Marchf7).